The primary structure comprises 439 residues: Adenylosuccinate synthetase (439 aa).

GTP is bound by residues 25–31 (GDEGKGK), 53–55 (GHT), and Lys62. The Proton acceptor role is filled by Asp26. The Mg(2+) site is built by Asp26 and Gly53. IMP is bound by residues 26-29 (DEGK) and 51-54 (NAGH). The active-site Proton donor is the His54. 4 residues coordinate IMP: Thr141, Arg155, Asn232, and Thr247. Thr307 lines the GTP pocket. 307–313 (TTTNRPR) contributes to the substrate binding site. Arg311 lines the IMP pocket. GTP contacts are provided by residues Arg313, 339–341 (KLD), and 425–427 (GVG).

This sequence belongs to the adenylosuccinate synthetase family. In terms of assembly, homodimer. Mg(2+) is required as a cofactor.

Its subcellular location is the cytoplasm. The catalysed reaction is IMP + L-aspartate + GTP = N(6)-(1,2-dicarboxyethyl)-AMP + GDP + phosphate + 2 H(+). It functions in the pathway purine metabolism; AMP biosynthesis via de novo pathway; AMP from IMP: step 1/2. Plays an important role in the salvage pathway for purine nucleotide biosynthesis. Catalyzes the first committed step in the biosynthesis of AMP from IMP. This chain is Adenylosuccinate synthetase, found in Plasmodium yoelii yoelii.